The chain runs to 250 residues: Short-chain dehydrogenase RED3 (250 aa).

Positions 16, 35, 63, and 91 each coordinate NADP(+). Catalysis depends on proton donor residues Ser145 and Tyr164. Residues Tyr164, Lys168, Val195, and Ser197 each coordinate NADP(+). The Lowers pKa of active site Tyr role is filled by Lys168.

This sequence belongs to the short-chain dehydrogenases/reductases (SDR) family.

The protein operates within polyketide biosynthesis. Functionally, short-chain dehydrogenase; part of the gene cluster that mediates the biosynthesis of pyriculol and pyriculariol, two heptaketides that induce lesion formation upon application on rice leaves but are dispensable for pathogenicity. The highly reducing polyketide synthase synthesizes the heptaketide backbone of pyriculol and pyriculariol. Pyriculol and pyriculariol contain several hydroxyl moieties and double bonds, so it can be assumed that several reduction steps occur during biosynthesis. These reactions could be executed by PKS19 itself or partly by the tailoring enzymes OXR1, OXR2, RED1, RED2 or RED3, identified within the cluster. The FAD-linked oxidoreductase OXR1 is the only tailoring enzyme for which the function has been determined yet, and is involved in the oxidation of dihydropyriculol and dihydropyriculariol into pyriculol and pyriculariol, respectively. In Pyricularia oryzae (strain 70-15 / ATCC MYA-4617 / FGSC 8958) (Rice blast fungus), this protein is Short-chain dehydrogenase RED3.